A 282-amino-acid polypeptide reads, in one-letter code: Tetraspanin-6 (282 aa).

Residues 1–7 (MYRFSNT) are Cytoplasmic-facing. A helical membrane pass occupies residues 8 to 28 (VIGVLNLLTLLASIPIIGTAL). Over 29 to 44 (YKARSSTTCENFLQTP) the chain is Extracellular. The helical transmembrane segment at 45–65 (LLVIGFIILIVSLAGFIGACF) threads the bilayer. The Cytoplasmic segment spans residues 66 to 74 (NVAWALWVY). The chain crosses the membrane as a helical span at residues 75–95 (LVVMIFLIATLMGLTLFGLVV). Topologically, residues 96–220 (TSQGGGVEVP…EIRLDWRKLS (125 aa)) are extracellular. Residues 221–241 (VVNILVLVLLIAVYAAGCCAF) traverse the membrane as a helical segment. Residues 242–282 (HNTRHAAHPYHPSDDNRMTRVRPRWDYYWWRWWHEKKEQLY) lie on the Cytoplasmic side of the membrane.

Belongs to the tetraspanin (TM4SF) family.

The protein resides in the membrane. Functionally, may be involved in the regulation of cell differentiation. This chain is Tetraspanin-6 (TET6), found in Arabidopsis thaliana (Mouse-ear cress).